The following is a 192-amino-acid chain: Phosphoheptose isomerase (192 aa).

In terms of domain architecture, SIS spans 37–192; that stretch reads LADSFKAGGK…IQLIEKEMAK (156 aa). Residue 52-54 coordinates substrate; the sequence is NGG. Residues histidine 61 and glutamate 65 each contribute to the Zn(2+) site. Residues glutamate 65, 93-94, 119-121, serine 124, and glutamine 172 each bind substrate; these read ND and STS. Zn(2+)-binding residues include glutamine 172 and histidine 180.

Belongs to the SIS family. GmhA subfamily. Homotetramer. Requires Zn(2+) as cofactor.

It localises to the cytoplasm. It catalyses the reaction 2 D-sedoheptulose 7-phosphate = D-glycero-alpha-D-manno-heptose 7-phosphate + D-glycero-beta-D-manno-heptose 7-phosphate. It participates in carbohydrate biosynthesis; D-glycero-D-manno-heptose 7-phosphate biosynthesis; D-glycero-alpha-D-manno-heptose 7-phosphate and D-glycero-beta-D-manno-heptose 7-phosphate from sedoheptulose 7-phosphate: step 1/1. In terms of biological role, catalyzes the isomerization of sedoheptulose 7-phosphate in D-glycero-D-manno-heptose 7-phosphate. This chain is Phosphoheptose isomerase, found in Escherichia fergusonii (strain ATCC 35469 / DSM 13698 / CCUG 18766 / IAM 14443 / JCM 21226 / LMG 7866 / NBRC 102419 / NCTC 12128 / CDC 0568-73).